Here is a 425-residue protein sequence, read N- to C-terminus: Secernin-2 (425 aa).

Residue C12 is part of the active site. Position 52 is a phosphothreonine (T52).

The protein belongs to the peptidase C69 family. Secernin subfamily.

This chain is Secernin-2 (SCRN2), found in Homo sapiens (Human).